Consider the following 309-residue polypeptide: Pseudouridine-5'-phosphate glycosidase 2 (309 aa).

Glu26 (proton donor) is an active-site residue. Residues Lys87 and Val107 each contribute to the substrate site. Asp139 is a binding site for Mn(2+). Residue 141–143 (SAD) participates in substrate binding. Residue Lys160 is the Nucleophile of the active site.

Belongs to the pseudouridine-5'-phosphate glycosidase family. Homotrimer. Mn(2+) serves as cofactor.

It carries out the reaction D-ribose 5-phosphate + uracil = psi-UMP + H2O. In terms of biological role, catalyzes the reversible cleavage of pseudouridine 5'-phosphate (PsiMP) to ribose 5-phosphate and uracil. Functions biologically in the cleavage direction, as part of a pseudouridine degradation pathway. This Rhizobium johnstonii (strain DSM 114642 / LMG 32736 / 3841) (Rhizobium leguminosarum bv. viciae) protein is Pseudouridine-5'-phosphate glycosidase 2.